Reading from the N-terminus, the 663-residue chain is Innate immunity activator protein (663 aa).

The interval 1–73 (MLQMPKLNEI…PGPGWDQCSP (73 aa)) is disordered. Residues 23–47 (EGRWAGPTGPEAARPARGARGQARG) are compositionally biased toward low complexity. Positions 50 to 59 (ARWDSWEHSR) are enriched in basic and acidic residues. Positions 117-147 (NAVRKQQRALEARLEACLEELRRLCLREAEL) form a coiled coil. The Nuclear localization signal (NLS) 1 motif lies at 164 to 170 (PKVRRRI). Disordered regions lie at residues 219 to 363 (RQRK…SSLW) and 375 to 405 (IRNV…QSLR). Residues 225 to 246 (ALQEEKKLRDLQRCLGDRRRNS) show a composition bias toward basic and acidic residues. Residues 259–272 (ELSASDDSSLSDGL) show a composition bias toward low complexity. Residues 282–298 (PKPPPESPAPPSRPLPP) show a composition bias toward pro residues. A compositionally biased stretch (basic and acidic residues) spans 327-340 (TSLDHPYEKPRKSS). The Nuclear localization signal (NLS) 2 signature appears at 332–338 (PYEKPRK). Over residues 349–361 (PATTPQDQPNPSS) the composition is skewed to polar residues. Positions 422–428 (PRRRPTH) match the Nuclear localization signal (NLS) 3 motif. The interval 448 to 483 (PACHSCSEDSGSDVSSISHPTSPGSSSPDISFLRPL) is disordered. Over residues 455–475 (EDSGSDVSSISHPTSPGSSSP) the composition is skewed to low complexity.

As to quaternary structure, interacts with IRAK1, NOD2 and RIPK2; the interaction takes place upon PRR stimulation. Interacts with YWHAQ/14-3-3T; the interaction increases upon PRR stimulation and is required for cellular signaling pathway activation and cytokine secretion. Interacts (via N-terminal domain) with CYTH1 and CYTH2 (via their N-terminal domains). Interacts with FBXW11 and BTRC; associates with SCF E3 ubiquitin-protein ligase complexes.

It localises to the nucleus. The protein localises to the cytoplasm. Its function is as follows. Expressed in peripheral macrophages and intestinal myeloid-derived cells, is required for optimal PRR (pattern recognition receptor)-induced signaling, cytokine secretion, and bacterial clearance. Upon stimulation of a broad range of PRRs (pattern recognition receptor) such as NOD2 or TLR2, TLR3, TLR4, TLR5, TLR7 and TLR9, associates with YWHAQ/14-3-3T, which in turn leads to the recruitment and activation of MAP kinases and NF-kappa-B signaling complexes that amplifies PRR-induced downstream signals and cytokine secretion. In the intestine, regulates adherens junction stability by regulating the degradation of CYTH1 and CYTH2, probably acting as substrate cofactor for SCF E3 ubiquitin-protein ligase complexes. Stabilizes adherens junctions by limiting CYTH1-dependent ARF6 activation. The polypeptide is Innate immunity activator protein (Mus musculus (Mouse)).